A 527-amino-acid chain; its full sequence is Peptide chain release factor 3 (527 aa).

A tr-type G domain is found at 9 to 277; that stretch reads AKRRTFAIIS…AVVNWAPKPL (269 aa). GTP is bound by residues 18 to 25, 86 to 90, and 140 to 143; these read SHPDAGKT, DTPGH, and NKLD.

The protein belongs to the TRAFAC class translation factor GTPase superfamily. Classic translation factor GTPase family. PrfC subfamily.

It is found in the cytoplasm. Its function is as follows. Increases the formation of ribosomal termination complexes and stimulates activities of RF-1 and RF-2. It binds guanine nucleotides and has strong preference for UGA stop codons. It may interact directly with the ribosome. The stimulation of RF-1 and RF-2 is significantly reduced by GTP and GDP, but not by GMP. This chain is Peptide chain release factor 3, found in Pseudomonas syringae pv. syringae (strain B728a).